A 504-amino-acid polypeptide reads, in one-letter code: Pentatricopeptide repeat-containing protein At1g09220, mitochondrial (504 aa).

A mitochondrion-targeting transit peptide spans 1 to 87 (MFLFSSRRIT…FLFNPLLRCY (87 aa)). PPR repeat units follow at residues 76–110 (KLFL…HFLS), 120–156 (DSFT…GFES), 157–187 (HVYV…MPER), 188–222 (NPVT…TVVS), 223–253 (WTTI…DAIK), 255–289 (NEIT…GFVP), 291–321 (DIRV…IPNG), 324–358 (NLVS…GLKP), 359–390 (NRVT…MVNE), and 396–430 (DVKH…EKAV). A type E motif; degenerate region spans residues 431 to 504 (VWRMLLGACS…AKLPGHSQVT (74 aa)).

The protein belongs to the PPR family. PCMP-E subfamily.

The protein localises to the mitochondrion. The polypeptide is Pentatricopeptide repeat-containing protein At1g09220, mitochondrial (PCMP-E25) (Arabidopsis thaliana (Mouse-ear cress)).